The sequence spans 156 residues: Aspartate carbamoyltransferase regulatory chain (156 aa).

4 residues coordinate Zn(2+): cysteine 107, cysteine 112, cysteine 137, and cysteine 140.

It belongs to the PyrI family. As to quaternary structure, contains catalytic and regulatory chains. The cofactor is Zn(2+).

Involved in allosteric regulation of aspartate carbamoyltransferase. The sequence is that of Aspartate carbamoyltransferase regulatory chain from Methanopyrus kandleri (strain AV19 / DSM 6324 / JCM 9639 / NBRC 100938).